The sequence spans 149 residues: Transthyretin (149 aa).

Positions Met-1–Thr-20 are cleaved as a signal peptide. Cys-32 carries the post-translational modification Sulfocysteine. L-thyroxine is bound at residue Lys-37. Glu-64 carries the post-translational modification 4-carboxyglutamate. Positions 76 and 139 each coordinate L-thyroxine.

Belongs to the transthyretin family. As to quaternary structure, homotetramer. Dimer of dimers. In the homotetramer, subunits assemble around a central channel that can accommodate two ligand molecules. Interacts with RBP4. In terms of processing, sulfonation of the reactive cysteine Cys-32 enhances the stability of the native conformation of TTR, avoiding misassembly of the protein leading to amyloid formation.

The protein resides in the secreted. In terms of biological role, thyroid hormone-binding protein. Probably transports thyroxine from the bloodstream to the brain. The polypeptide is Transthyretin (TTR) (Notamacropus eugenii (Tammar wallaby)).